The chain runs to 156 residues: 3-hydroxyacyl-[acyl-carrier-protein] dehydratase FabZ (156 aa).

Histidine 57 is a catalytic residue.

This sequence belongs to the thioester dehydratase family. FabZ subfamily.

The protein resides in the cytoplasm. The catalysed reaction is a (3R)-hydroxyacyl-[ACP] = a (2E)-enoyl-[ACP] + H2O. In terms of biological role, involved in unsaturated fatty acids biosynthesis. Catalyzes the dehydration of short chain beta-hydroxyacyl-ACPs and long chain saturated and unsaturated beta-hydroxyacyl-ACPs. This is 3-hydroxyacyl-[acyl-carrier-protein] dehydratase FabZ from Anaeromyxobacter sp. (strain K).